A 392-amino-acid polypeptide reads, in one-letter code: 8-amino-7-oxononanoate synthase (392 aa).

Arg-21 contacts substrate. Residue 108 to 109 (GF) participates in pyridoxal 5'-phosphate binding. His-133 contacts substrate. Pyridoxal 5'-phosphate contacts are provided by residues Ser-181, 206-209 (DDAH), and 237-240 (TLSK). An N6-(pyridoxal phosphate)lysine modification is found at Lys-240. Residue Thr-354 coordinates substrate.

This sequence belongs to the class-II pyridoxal-phosphate-dependent aminotransferase family. BioF subfamily. As to quaternary structure, homodimer. Requires pyridoxal 5'-phosphate as cofactor.

It carries out the reaction 6-carboxyhexanoyl-[ACP] + L-alanine + H(+) = (8S)-8-amino-7-oxononanoate + holo-[ACP] + CO2. Its pathway is cofactor biosynthesis; biotin biosynthesis. Catalyzes the decarboxylative condensation of pimeloyl-[acyl-carrier protein] and L-alanine to produce 8-amino-7-oxononanoate (AON), [acyl-carrier protein], and carbon dioxide. This Symbiobacterium thermophilum (strain DSM 24528 / JCM 14929 / IAM 14863 / T) protein is 8-amino-7-oxononanoate synthase.